Here is a 356-residue protein sequence, read N- to C-terminus: Protein RecA (356 aa).

Residue 68–75 participates in ATP binding; the sequence is GPESSGKT.

The protein belongs to the RecA family.

Its subcellular location is the cytoplasm. Its function is as follows. Can catalyze the hydrolysis of ATP in the presence of single-stranded DNA, the ATP-dependent uptake of single-stranded DNA by duplex DNA, and the ATP-dependent hybridization of homologous single-stranded DNAs. It interacts with LexA causing its activation and leading to its autocatalytic cleavage. The chain is Protein RecA from Clostridium botulinum (strain Alaska E43 / Type E3).